The primary structure comprises 325 residues: NADH-quinone oxidoreductase subunit H (325 aa).

The next 8 membrane-spanning stretches (helical) occupy residues 11–31, 81–101, 114–134, 154–174, 186–206, 237–257, 265–285, and 304–324; these read ILLT…CGAF, VIFT…FAIV, IGIL…LFAG, LSYE…AGSF, VWNV…GVAV, FFVG…TLFF, LPPF…FILI, and ICLP…LWQA.

It belongs to the complex I subunit 1 family. As to quaternary structure, NDH-1 is composed of 13 different subunits. Subunits NuoA, H, J, K, L, M, N constitute the membrane sector of the complex.

The protein resides in the cell inner membrane. The catalysed reaction is a quinone + NADH + 5 H(+)(in) = a quinol + NAD(+) + 4 H(+)(out). Its function is as follows. NDH-1 shuttles electrons from NADH, via FMN and iron-sulfur (Fe-S) centers, to quinones in the respiratory chain. The immediate electron acceptor for the enzyme in this species is believed to be ubiquinone. Couples the redox reaction to proton translocation (for every two electrons transferred, four hydrogen ions are translocated across the cytoplasmic membrane), and thus conserves the redox energy in a proton gradient. This subunit may bind ubiquinone. The sequence is that of NADH-quinone oxidoreductase subunit H from Escherichia coli O139:H28 (strain E24377A / ETEC).